The chain runs to 66 residues: Ocellatin-PT3 (66 aa).

Residues 1–22 (MAFLKKSLFLVLFLGLVSLSIC) form the signal peptide. The propeptide occupies 23 to 39 (DEEKRQDEDDDDDDDEE). Val-66 bears the Valine amide mark.

Expressed by the skin glands.

It is found in the secreted. In terms of biological role, has antibacterial activity against Gram-negative bacterium E.coli ATCC 25922 (MIC=320 uM) but not against S.pneumoniae ATCC 700603, S.choleraesuis ATCC 14028 or Gram-positive bacterium S.aureus ATCC 29313. Shows no hemolytic activity and no cytotoxicity. This chain is Ocellatin-PT3, found in Leptodactylus pustulatus (Ceara white-lipped frog).